The chain runs to 770 residues: ARF GTPase-activating protein GIT1 (770 aa).

Positions 1 to 124 constitute an Arf-GAP domain; it reads MSRKGPRAEV…AFVHKLPCRD (124 aa). The segment at 1 to 124 is interaction with gamma-tubulin and localization to the centrosome; sequence MSRKGPRAEV…AFVHKLPCRD (124 aa). The segment at 11 to 34 adopts a C4-type zinc-finger fold; that stretch reads CADCSAPDPGWASISRGVLVCDEC. 3 ANK repeats span residues 132–161, 166–195, and 199–228; these read DLSK…QANF, KGTT…DPGS, and NGRT…ELTD. Tyr224 bears the Phosphotyrosine mark. The segment at 245–374 is interaction with PCLO; that stretch reads HYIIPQMADR…QGKSLSSPTD (130 aa). Residues 253–424 form an interaction with PTK2/FAK1 region; the sequence is DRSRQKCMSQ…NRARSMDSSD (172 aa). The tract at residues 254-376 is interaction with ARHGEF7; it reads RSRQKCMSQS…KSLSSPTDNL (123 aa). Residues 363–425 are disordered; the sequence is RQQGKSLSSP…RARSMDSSDL (63 aa). Residues 366 to 383 show a composition bias toward polar residues; that stretch reads GKSLSSPTDNLELSARSQ. A phosphoserine mark is found at Ser368 and Ser371. Thr373 carries the post-translational modification Phosphothreonine. Residues 375–596 form an interaction with NCK2 and GRIN3A region; sequence NLELSARSQS…QEGSRHASKL (222 aa). Positions 375-596 are required for localization at synapses; that stretch reads NLELSARSQS…QEGSRHASKL (222 aa). Ser379 and Ser384 each carry phosphoserine. Phosphotyrosine is present on Tyr392. A phosphoserine mark is found at Ser394 and Ser397. Residues 394 to 403 show a composition bias toward acidic residues; that stretch reads SVASDEDTDQ. Thr401 carries the phosphothreonine modification. Phosphoserine is present on residues Ser419, Ser422, and Ser426. The interval 420–475 is interaction with MAPK1; the sequence is MDSSDLSDGAVTLQEYLELKKALATSEAKVQQLMKVNSSLSDELRRLQREIHKLQA. Residues 429–629 form an interaction with IKBKG region; that stretch reads AVTLQEYLEL…EGKRFLELSK (201 aa). The stretch at 449-483 forms a coiled coil; that stretch reads VQQLMKVNSSLSDELRRLQREIHKLQAENLQLRQP. 2 positions are modified to phosphoserine: Ser507 and Ser545. The residue at position 546 (Thr546) is a Phosphothreonine. Residues Tyr554 and Tyr563 each carry the phosphotyrosine modification. Ser570, Ser580, Ser601, and Ser605 each carry phosphoserine. Residues 578-588 are compositionally biased toward polar residues; that stretch reads PSSPLLSCSQE. Residues 578-615 form a disordered region; that stretch reads PSSPLLSCSQEGSRHASKLSRHGSGADSDYENTQSGDP. Thr610 is subject to Phosphothreonine. Position 639 is a phosphoserine (Ser639). The interval 646–770 is interaction with PXN and TGFB1I1; sequence PGLPSTEDVI…VTITTREKKQ (125 aa).

Forms homodimers and possibly oligomers. May forms heterooligomers with GIT2. Interacts with G protein-coupled receptor kinases, including GRK2, GRK3, GRK5 and GRK6. Interacts with PPFIA1, PPFIA2 and PPFIA4. Interacts with GRIP1 and forms a ternary complex with PPFIA1 and GRIP1. Directly interacts with ARHGEF7/beta-PIX, forming in vitro a heptameric complex made of a GIT1 dimer and an ARHGEF7 trimer. Directly interacts with PXN/paxillin; this interaction is enhanced in the presence of ARHGEF7. Directly interacts (via C-terminus) with TGFB1I1/Hic-5 (via LD motif 3). Directly interacts with PTK2/FAK1. May interact with PTK2B/PYK2; this interaction may be indirect. Interacts with AMPA receptors GRIA2/3. Directly interacts with protein Piccolo/PCLO. Forms a complex with Ephrin-B1/EFNB1 and NCK2/GRB4 (via SH2); this interaction is important for spine morphogenesis and synapse formation. Interaction with NCK2 is transient and depends upon GIT1 phosphorylation at Tyr-392. Interacts with GRIN3A/GluN3A (via C-terminus); this interaction competes with GIT1 interaction with ARHGEF7 and limits synaptic localization of GIT1. Interacts with IKBKG/NEMO in resting bone mesenchymal stem cells, as well as in TNF-stimulated cells; this interaction may increase IKBKG affinity for 'Lys-63'-linked polyubiquitin chains. Interacts with GABA(A) receptors, including GABRB3 and GABRG2. Interacts with SCRIB. Interacts (via N- and C-terminus) with ENTR1/SDCCAG3 (via N-terminus); this interaction is direct. May form a tripartite complex with ENTR1 and PTPN13. Interacts with YWHAZ. Interacts with PAK1. Interacts with PAK3. Directly interacts (via N-terminus) with gamma-tubulin. Interacts with MAPK1 and MAPK3; this interaction is required for MAPK1/3 recruitment to focal adhesions. In terms of processing, phosphorylated on tyrosine residues by PTK2/FAK1 and SRC in growing fibroblasts. Phosphorylation at Tyr-392 is induced by activation of Ephrin-B1/EFNB1 and catalyzed by SRC family kinases. It is required for the interaction with NCK2 and for GIT1 recruitment to synapses in hippocampal neurons. Expressed in the brain (at protein level). Also expressed at high levels in lung and heart. In lung, expressed in endothelial cells, especially in capillaries; also expressed in smooth muscle and epithelial cells of bronchi (at protein level). Expressed in bone marrow mesenchymal stem cells, as well as in osteoclasts and bone marrow-derived macrophages (at protein level).

It localises to the cytoplasm. The protein localises to the presynapse. It is found in the postsynapse. The protein resides in the postsynaptic density. Its subcellular location is the cell junction. It localises to the focal adhesion. The protein localises to the cell projection. It is found in the lamellipodium. The protein resides in the cytoskeleton. Its subcellular location is the microtubule organizing center. It localises to the centrosome. The protein localises to the spindle pole. Functionally, GTPase-activating protein for ADP ribosylation factor family members, including ARF1. Multidomain scaffold protein that interacts with numerous proteins and therefore participates in many cellular functions, including receptor internalization, focal adhesion remodeling, and signaling by both G protein-coupled receptors and tyrosine kinase receptors. Through PAK1 activation, positively regulates microtubule nucleation during interphase. Plays a role in the regulation of cytokinesis; for this function, may act in a pathway also involving ENTR1 and PTPN13. May promote cell motility both by regulating focal complex dynamics and by the activation of RAC1. May act as scaffold for MAPK1/3 signal transduction, recruiting MAPK1/3 to focal adhesions after EGF stimulation via a Src-dependent pathway, hence stimulating cell migration. Plays a role in brain development and function. Involved in the regulation of spine density and synaptic plasticity that is required for processes involved in learning. Plays an important role in dendritic spine morphogenesis and synapse formation. In hippocampal neurons, recruits guanine nucleotide exchange factors (GEFs), such as ARHGEF7/beta-PIX, to the synaptic membrane. These in turn locally activate RAC1, which is an essential step for spine morphogenesis and synapse formation. May contribute to the organization of presynaptic active zones through oligomerization and formation of a Piccolo/PCLO-based protein network, which includes ARHGEF7/beta-PIX and FAK1. In neurons, through its interaction with liprin-alpha family members, may be required for AMPA receptor (GRIA2/3) proper targeting to the cell membrane. In complex with GABA(A) receptors and ARHGEF7, plays a crucial role in regulating GABA(A) receptor synaptic stability, maintaining GPHN/gephyrin scaffolds and hence GABAergic inhibitory synaptic transmission, by locally coordinating RAC1 and PAK1 downstream effector activity, leading to F-actin stabilization. May also be important for RAC1 downstream signaling pathway through PAK3 and regulation of neuronal inhibitory transmission at presynaptic input. Required for successful bone regeneration during fracture healing. The function in intramembranous ossification may, at least partly, exerted by macrophages in which GIT1 is a key negative regulator of redox homeostasis, IL1B production, and glycolysis, acting through the ERK1/2/NRF2/NFE2L2 axis. May play a role in angiogenesis during fracture healing. In this process, may regulate activation of the canonical NF-kappa-B signal in bone mesenchymal stem cells by enhancing the interaction between NEMO and 'Lys-63'-ubiquitinated RIPK1/RIP1, eventually leading to enhanced production of VEGFA and others angiogenic factors. Essential for VEGF signaling through the activation of phospholipase C-gamma and ERK1/2, hence may control endothelial cell proliferation and angiogenesis. This Mus musculus (Mouse) protein is ARF GTPase-activating protein GIT1 (Git1).